Here is a 148-residue protein sequence, read N- to C-terminus: Protein SprT-like (148 aa).

Positions 6–147 (LQQLVATISM…CGRCQGPIKL (142 aa)) constitute a SprT-like domain. H67 lines the Zn(2+) pocket. E68 is an active-site residue. H71 provides a ligand contact to Zn(2+).

The protein belongs to the SprT family. The cofactor is Zn(2+).

It is found in the cytoplasm. This chain is Protein SprT-like, found in Lactiplantibacillus plantarum (strain ATCC BAA-793 / NCIMB 8826 / WCFS1) (Lactobacillus plantarum).